A 419-amino-acid chain; its full sequence is GTPase Obg (419 aa).

Residues 1–156 form the Obg domain; sequence MRFVDYVSIE…FYLDLQLKVM (156 aa). The OBG-type G domain occupies 157 to 334; that stretch reads ADIGLVGKPN…LGEKQKKLEI (178 aa). GTP-binding positions include 163 to 170, 188 to 192, 209 to 212, 278 to 281, and 315 to 317; these read GKPNAGKS, FTTLA, DLPG, NKCD, and NII. Ser-170 and Thr-190 together coordinate Mg(2+). The 78-residue stretch at 342–419 folds into the OCT domain; the sequence is IEFNLKAPFL…RIYEFEFHWN (78 aa).

The protein belongs to the TRAFAC class OBG-HflX-like GTPase superfamily. OBG GTPase family. Monomer. Requires Mg(2+) as cofactor.

The protein resides in the cytoplasm. Its function is as follows. An essential GTPase which binds GTP, GDP and possibly (p)ppGpp with moderate affinity, with high nucleotide exchange rates and a fairly low GTP hydrolysis rate. Plays a role in control of the cell cycle, stress response, ribosome biogenesis and in those bacteria that undergo differentiation, in morphogenesis control. The polypeptide is GTPase Obg (Mesomycoplasma hyopneumoniae (strain J / ATCC 25934 / NCTC 10110) (Mycoplasma hyopneumoniae)).